The primary structure comprises 570 residues: Aspartyl aminopeptidase (570 aa).

Histidine 86 serves as a coordination point for Zn(2+). Histidine 160 serves as a coordination point for substrate. Aspartate 324 provides a ligand contact to Zn(2+). Residue glutamate 379 coordinates substrate. Positions 380 and 434 each coordinate Zn(2+). Substrate contacts are provided by aspartate 434, histidine 437, lysine 462, and tyrosine 469. Position 534 (histidine 534) interacts with Zn(2+).

It belongs to the peptidase M18 family. In terms of assembly, homododecamer composed of homodimers and homotrimers that assemble into a tetrahedron shape to create a central tunnel containing the active sites. Homooctamer. The cofactor is Zn(2+).

The protein localises to the cytoplasm. It carries out the reaction Release of an N-terminal aspartate or glutamate from a peptide, with a preference for aspartate.. Activated by Co(2+). Inhibited by high concentrations (&gt;1mM) of Zn(2+). Its function is as follows. Aminopeptidase which specifically catalyzes the removal of glutamic acid or aspartic acid residues from the N-terminus of peptides. May play a role in the final step of host hemoglobin catabolism, by cleaving hemoglobin-derived oligopeptides in the cytoplasm. The chain is Aspartyl aminopeptidase from Plasmodium falciparum (isolate 3D7).